A 338-amino-acid chain; its full sequence is MGLKINRPRRGSMGVYPRKRAADIVPRVRTWPEVNLGKPTLLGFAAYKAGMLHAVVVDDRPTSPLYGKEVVKAVTVLDAPPLYVAAVRLYTLDPTNGYKVAVGEAWVSEPPADLRRVLTLPEKFDTEKQLKALEEYRDVAVDVRVLVATQPRLSGIGKKTPEVLEIPVGGVPSIDERINFAISLLGKTVSPKDVFTPGQLVDVIAVTKGKGYQGVVKRFGVTILPRWHKHRKGHRRTGTIGPQAPALMFTQPRPGQMGFHQRTEYNKRILKIGDNGAEITPKSGFPHYGVIKGPYILLQGSVPGARKRLVVLRYPVRPPKKAPPAAEPQVVWVSSQSI.

The span at 228 to 237 shows a compositional bias: basic residues; that stretch reads HKHRKGHRRT. A disordered region spans residues 228–255; the sequence is HKHRKGHRRTGTIGPQAPALMFTQPRPG.

This sequence belongs to the universal ribosomal protein uL3 family. Part of the 50S ribosomal subunit. Forms a cluster with proteins L14 and L24e.

In terms of biological role, one of the primary rRNA binding proteins, it binds directly near the 3'-end of the 23S rRNA, where it nucleates assembly of the 50S subunit. The chain is Large ribosomal subunit protein uL3 from Pyrobaculum calidifontis (strain DSM 21063 / JCM 11548 / VA1).